The chain runs to 95 residues: Defensin-like protein 232 (95 aa).

The first 26 residues, methionine 1–alanine 26, serve as a signal peptide directing secretion. Cystine bridges form between cysteine 33–cysteine 94, cysteine 43–cysteine 68, cysteine 51–cysteine 84, and cysteine 66–cysteine 86.

This sequence belongs to the DEFL family. As to expression, flower buds.

It is found in the secreted. In Arabidopsis thaliana (Mouse-ear cress), this protein is Defensin-like protein 232 (SCRL23).